A 117-amino-acid polypeptide reads, in one-letter code: Large ribosomal subunit protein bL19 (117 aa).

This sequence belongs to the bacterial ribosomal protein bL19 family.

This protein is located at the 30S-50S ribosomal subunit interface and may play a role in the structure and function of the aminoacyl-tRNA binding site. This Alkalilimnicola ehrlichii (strain ATCC BAA-1101 / DSM 17681 / MLHE-1) protein is Large ribosomal subunit protein bL19.